Consider the following 341-residue polypeptide: uncharacterized protein (341 aa).

This is an uncharacterized protein from Treponema pallidum (strain Nichols).